Reading from the N-terminus, the 191-residue chain is Large ribosomal subunit protein uL6 (191 aa).

It belongs to the universal ribosomal protein uL6 family. As to quaternary structure, part of the 50S ribosomal subunit.

Functionally, this protein binds to the 23S rRNA, and is important in its secondary structure. It is located near the subunit interface in the base of the L7/L12 stalk, and near the tRNA binding site of the peptidyltransferase center. In Cyanothece sp. (strain PCC 7425 / ATCC 29141), this protein is Large ribosomal subunit protein uL6.